The sequence spans 1067 residues: MLKSLLIIVIVFLHRELCDGIQLILFDNWPSAQNVCASAVADATANGQCTTKSIQKHLELLTVIILLKLFGVFHRINQQHGCSGDNSVKSASYAINAVASRTSGELDFVFVGPTCTTDIRTIGDFAEIWKSPVIGYEPVFEARGVQELTSVINVAQFSVGGVAETLVFLMKELEQVEITLVGSVKVLPNGLSLSNDLRSYNEIMNSFKIREYVEVDENDVDWTKVDQKIKRGARMIVVCADFYDIYSAFYNIGIRSLSGFRFIIVVILNKPPDEILNQPNVKNLLYGSNAFIISPLQEQYSDAFSIMQDVIPNLADDQFTTFLRIYHACYAYCVGSVNGAETQTDNYHTAMSGKAVTTKYGTFTFDNSGSVLTNYAVFTINPAEMTFESILTLKSVAKSCDTYNCFQLSPNKTSDLLWTLKDMDPPDDCVAKSSCVNYIPHIIAAVVIVTIIVIAIVIIVKQRRHKLNIYKLTWKVPKESLKIIVNKNADAKMQRELENRASNTDNAAALTSRRRVFGSYALVGTQRAEYVQFKQIRKINFPETTLDYLYSLKQLQHDNLAKFYGIQVNDDIMTMTILHTLVERGTLEEFCLDRDFGMDDTFKSAFMRDILKGLQYLHKSSIGYHGHLQASTCLIDINWVLKLTLYGVSNFMSDQLDAENIKVPEQAAHMITYPQYVCFPPEHIREYDDSGKQPPRVVRGSPKGDIYCVGMIFYMMVEREDPYHLIHSVERPNATLIKQILNENHMPRITDDYRQENMLLEMCKECWDRNPDKRPTIKKLIESISTVYPLSKGNLVDQMIRMSEKYADELEQMVAIRTADLADAQMQTMRLLNEMLPASIAKDLKNGLIMPPRSYESATVMFVQICDFNALMKRSSPEQVIAFLNDIYDQFDTVIKRHDAYKVETTGETYMVASGVPHENEGRHIFEVAEISLEIREISYIYVLQHDKNYKLRIRIGFHAGPIAAGVIGIRSPRYCLFGDTVNFASRMQSNCPPNQIQTSEITARLLFDSHEYKFVKRGIVHVKGKGEVNCYWLNEHLHEETEPPLPPMTPVPNPLRRGSIVPLQKA.

The signal sequence occupies residues Met1–Gly20. At Ile21–Tyr438 the chain is on the extracellular side. Asn411 is a glycosylation site (N-linked (GlcNAc...) asparagine). A helical transmembrane segment spans residues Ile439 to Ile459. Residues Val460–Ala1067 are Cytoplasmic-facing. In terms of domain architecture, Protein kinase spans Ala509–Ser791. Residues Arg515 to Val523 and Lys534 contribute to the ATP site. The Guanylate cyclase domain maps to Thr859 to Gln989.

The protein belongs to the adenylyl cyclase class-4/guanylyl cyclase family. Expressed predominantly in AWC but also in AWB, ASI, ASJ and ASK sensory neurons and in I1 interneuron.

Its subcellular location is the cell membrane. It localises to the cell projection. It is found in the cilium. The enzyme catalyses GTP = 3',5'-cyclic GMP + diphosphate. Its function is as follows. Guanylate cyclase involved in the production of the second messenger cGMP. Regulates chemotaxis responses toward volatile odorants in AWC sensory neurons and their avoidance in AWB sensory neurons. May be involved in sensitivity to quinine by regulating egl-4 activity through the production of cGMP. Involved in phototransduction in ASJ neurons downstream of G protein coupled-photoreceptor lite-1. Required to maintain the expression of putative olfactory receptor str-2 in AWC neurons in adults. In AWB and AWC sensory neurons, mediates the recognition of food oders which subsequently allows for the detection of preferred food sources. Involved in AWB sensory neuron development and extension during postembryonic development, potentially via mediating localization of tub-1 and PI(4,5)P2 to membrane cilia. The protein is Receptor-type guanylate cyclase gcy-10 of Caenorhabditis elegans.